A 175-amino-acid polypeptide reads, in one-letter code: Sec-independent protein translocase protein TatB (175 aa).

Residues 1-21 (MLDLGLTKMALIGVVALVVLG) form a helical membrane-spanning segment. Disordered stretches follow at residues 104–132 (GGAL…RKNW) and 155–175 (SGAA…TRFF).

Belongs to the TatB family. The Tat system comprises two distinct complexes: a TatABC complex, containing multiple copies of TatA, TatB and TatC subunits, and a separate TatA complex, containing only TatA subunits. Substrates initially bind to the TatABC complex, which probably triggers association of the separate TatA complex to form the active translocon.

The protein localises to the cell inner membrane. In terms of biological role, part of the twin-arginine translocation (Tat) system that transports large folded proteins containing a characteristic twin-arginine motif in their signal peptide across membranes. Together with TatC, TatB is part of a receptor directly interacting with Tat signal peptides. TatB may form an oligomeric binding site that transiently accommodates folded Tat precursor proteins before their translocation. This Paraburkholderia xenovorans (strain LB400) protein is Sec-independent protein translocase protein TatB.